An 88-amino-acid chain; its full sequence is Large ribosomal subunit protein eL34 (88 aa).

Residues 41 to 72 (RPLNGIPRGRPNELRKLPKTKKRPERPMPNLC) are disordered.

This sequence belongs to the eukaryotic ribosomal protein eL34 family.

The chain is Large ribosomal subunit protein eL34 from Thermococcus sibiricus (strain DSM 12597 / MM 739).